The chain runs to 474 residues: MNDKIVVDVLKLYLKRDPSLTEFHMLKSQYKNIQRVNIFNKEIFISLIKKNKKKFFSDIKSSPSDIKRSILTYFSKQENTYSIGKLYTIIELQSILVTTYTDVLGILTTKGPDLFTSNIYYNTSSMQSLARDALNFMNVAQMTDKTMGRHNVSSLVDNVNSLMEEYLRRHNKNCICYGSYSLHLLNPDVKYGDIDILQTNSRTFLIDLAFLIKFITGLNVVLLKVPYLKNYMVLKDQNDSHIIDSFNIRQDTMQSIPKVLIDNIYIVDPALQLMSMLKMFSQIDRLEDLAKNPEKLTVRLATLLEYVRVNYGINFISNQTKKNNMPMYSVIDIDKRIITVDTSNYDFPFKKCLVYLDESSLSSDILDLNADDAIDFENVSNSAFLINNNILYTYFSNTILMKSKTDIHEISSRGLSAHILIYQILTKGDIIKPLTDIVNSLIGVEKNPIYDIIPRDKKSGKHGIIDIEKDIITH.

Catalysis depends on residues Asp193 and Asp195.

This sequence belongs to the poxviridae poly(A) polymerase catalytic subunit family. Heterodimer of a large (catalytic) subunit and a small (regulatory) subunit.

The catalysed reaction is RNA(n) + ATP = RNA(n)-3'-adenine ribonucleotide + diphosphate. Functionally, polymerase that creates the 3'-poly(A) tail of mRNA's. This Bos taurus (Bovine) protein is Poly(A) polymerase catalytic subunit (PAPL).